Here is a 401-residue protein sequence, read N- to C-terminus: Calcium-responsive transcription coactivator (401 aa).

The N-terminal auto-inhibitory domain; necessary for interaction with SMARCA4/BRG1 stretch occupies residues 1–148 (MSVAFASARP…TLPTTSMSMS (148 aa)). Residues 50–53 (YQQI) carry the SH2-binding motif. 2 disordered regions span residues 72-171 (QSLL…VPMQ) and 214-401 (TRAR…NYQQ). Residues 85–106 (LGPGALSQSGSSQGLHPQGSLS) are compositionally biased toward low complexity. Polar residues predominate over residues 128 to 137 (NHVSMQQTAQ). Low complexity predominate over residues 138-149 (STLPTTSMSMSG). A methionine-rich intra-molecular domain region spans residues 149-237 (GSGHGTGPGY…GGSMMGQRPM (89 aa)). Residues 251–322 (YLGQEEYYSE…SQYSQQQAGY (72 aa)) are MFD domain. Composition is skewed to polar residues over residues 260–276 (EQYSHSQGSAEPMSQQY) and 285–294 (AYQQSSYTEQ). Basic and acidic residues predominate over residues 295–304 (SYDRSFEDPT). Residues 310–374 (GGNSQYSQQQ…QGQGQQYGSY (65 aa)) show a composition bias toward low complexity. Residues 339–401 (NQQSYPGQQQ…EQGQYGNYQQ (63 aa)) form a necessary for nuclear localization region. An SH2-binding motif is present at residues 358 to 361 (SQYS). Positions 375–387 (RTSQTGPSAQQQR) are enriched in polar residues. The SH3-binding motif lies at 376-384 (TSQTGPSAQ). Low complexity predominate over residues 389–401 (YGYEQGQYGNYQQ). The segment at 392 to 401 (EQGQYGNYQQ) is necessary for interaction with CREBBP and for the recruitment of CREBBP to the nuclear bodies. The SH2-binding signature appears at 396–399 (YGNY).

This sequence belongs to the SS18 family. As to quaternary structure, homodimer. Dimerization may be necessary for its function in neuronal dendritic development. Interacts (via C-terminus) with CREBBP (via N-terminus), EP300 and SMARCA4/BRG1. Interacts with the nBAF complex. Association with CREBBP facilitates transcription while the association with SMARCA4/BRG1 suppresses CREST-mediated transcription in resting neurons. In terms of tissue distribution, brain (at protein level). Also found in the heart, liver, kidney and testis.

The protein localises to the nucleus. Its subcellular location is the chromosome. The protein resides in the centromere. It is found in the kinetochore. Transcriptional activator which is required for calcium-dependent dendritic growth and branching in cortical neurons. Recruits CREB-binding protein (CREBBP) to nuclear bodies. Component of the CREST-BRG1 complex, a multiprotein complex that regulates promoter activation by orchestrating a calcium-dependent release of a repressor complex and a recruitment of an activator complex. In resting neurons, transcription of the c-FOS promoter is inhibited by BRG1-dependent recruitment of a phospho-RB1-HDAC1 repressor complex. Upon calcium influx, RB1 is dephosphorylated by calcineurin, which leads to release of the repressor complex. At the same time, there is increased recruitment of CREBBP to the promoter by a CREST-dependent mechanism, which leads to transcriptional activation. The CREST-BRG1 complex also binds to the NR2B promoter, and activity-dependent induction of NR2B expression involves a release of HDAC1 and recruitment of CREBBP. This chain is Calcium-responsive transcription coactivator (Ss18l1), found in Rattus norvegicus (Rat).